Here is a 428-residue protein sequence, read N- to C-terminus: Cytochrome c biogenesis protein CcsB (428 aa).

A run of 3 helical transmembrane segments spans residues 14-34 (LRFAISLIIFIAIASGIGTFI), 72-92 (SFWFLFTLILLCISLAACSFR), and 162-182 (IGPLVVHIGLIVLLIGSAYGS).

This sequence belongs to the Ccs1/CcsB family. May interact with CcsA.

It localises to the cellular thylakoid membrane. In terms of biological role, required during biogenesis of c-type cytochromes (cytochrome c6 and cytochrome f) at the step of heme attachment. The polypeptide is Cytochrome c biogenesis protein CcsB (Prochlorococcus marinus (strain AS9601)).